The primary structure comprises 313 residues: Ornithine carbamoyltransferase (313 aa).

Carbamoyl phosphate is bound by residues 61–64 (STRT), Gln-88, Arg-112, and 139–142 (HPCQ). L-ornithine-binding positions include Asn-170, Asp-228, and 232–233 (SM). Carbamoyl phosphate-binding positions include 268–269 (CL) and Arg-296.

It belongs to the aspartate/ornithine carbamoyltransferase superfamily. OTCase family.

The protein localises to the cytoplasm. It carries out the reaction carbamoyl phosphate + L-ornithine = L-citrulline + phosphate + H(+). The protein operates within amino-acid biosynthesis; L-arginine biosynthesis; L-arginine from L-ornithine and carbamoyl phosphate: step 1/3. Functionally, reversibly catalyzes the transfer of the carbamoyl group from carbamoyl phosphate (CP) to the N(epsilon) atom of ornithine (ORN) to produce L-citrulline. The protein is Ornithine carbamoyltransferase of Bordetella avium (strain 197N).